Here is a 313-residue protein sequence, read N- to C-terminus: Ankyrin repeat family A protein 2 (313 aa).

5 ANK repeats span residues 148–180 (ANSLSVHQLAAQGEMLYLATRIEQENVINHTDE), 181–213 (EGFTPLMWAAAHGQIAVVEFLLQNGADPQLLGK), 214–246 (GRESALSLACSKGYTDIVKMLLDCGVDVNEYDW), 247–279 (NGGTPLLYAVHGNHVKCVKMLLENGADPTIETD), and 280–313 (SGYNSMDLAVALGYRSVQQVIESHLLKLLQNIKE).

As to quaternary structure, interacts (via ANK repeats) with CCDC8 (via PxLPxI/L motif); mediates the interaction with the 3M complex which is composed of CCDC8, CUL7 and OBSL1. Interacts (via ANK repeats) with HDAC4 (via PxLPxI/L motif). Interacts (via ANK repeats) with HDAC5 (via PxLPxI/L motif). Interacts (via ANK repeats) with LRP2/megalin (via PxLPxI/L motif). Interacts (via ANK repeats) with RFX7 (via PxLPxI/L motif). Interacts with AHRR. Interacts with NEK6.

Its subcellular location is the cytoplasm. The protein localises to the cytoskeleton. It localises to the membrane. May regulate the interaction between the 3M complex and the histone deacetylases HDAC4 and HDAC5. May also regulate LRP2/megalin. The protein is Ankyrin repeat family A protein 2 (ANKRA2) of Bos taurus (Bovine).